The sequence spans 370 residues: Histidinol-phosphate aminotransferase 3 (370 aa).

The residue at position 233 (Lys233) is an N6-(pyridoxal phosphate)lysine.

The protein belongs to the class-II pyridoxal-phosphate-dependent aminotransferase family. Histidinol-phosphate aminotransferase subfamily. In terms of assembly, homodimer. The cofactor is pyridoxal 5'-phosphate.

The catalysed reaction is L-histidinol phosphate + 2-oxoglutarate = 3-(imidazol-4-yl)-2-oxopropyl phosphate + L-glutamate. The protein operates within amino-acid biosynthesis; L-histidine biosynthesis; L-histidine from 5-phospho-alpha-D-ribose 1-diphosphate: step 7/9. This is Histidinol-phosphate aminotransferase 3 from Burkholderia lata (strain ATCC 17760 / DSM 23089 / LMG 22485 / NCIMB 9086 / R18194 / 383).